The chain runs to 71 residues: Ranatuerin-2P (71 aa).

Positions 1–20 (MFTMKKSLLLFFFLGTISLS) are cleaved as a signal peptide. A propeptide spanning residues 21-44 (LCEQERGADEDDGVEITEEEVKRG) is cleaved from the precursor. A disulfide bond links C66 and C71.

Expressed by the skin glands.

It is found in the secreted. Functionally, antibacterial activity against Gram-positive bacterium S.aureus and Gram-negative bacterium E.coli. Has activity against C.albicans. In Lithobates pipiens (Northern leopard frog), this protein is Ranatuerin-2P.